A 433-amino-acid chain; its full sequence is Enolase (433 aa).

Residue Gln-167 coordinates (2R)-2-phosphoglycerate. The Proton donor role is filled by Glu-209. Residues Asp-246, Glu-291, and Asp-318 each coordinate Mg(2+). The (2R)-2-phosphoglycerate site is built by Lys-343, Arg-372, Ser-373, and Lys-394. Catalysis depends on Lys-343, which acts as the Proton acceptor.

Belongs to the enolase family. Component of the RNA degradosome, a multiprotein complex involved in RNA processing and mRNA degradation. Mg(2+) serves as cofactor.

The protein resides in the cytoplasm. The protein localises to the secreted. Its subcellular location is the cell surface. The enzyme catalyses (2R)-2-phosphoglycerate = phosphoenolpyruvate + H2O. It participates in carbohydrate degradation; glycolysis; pyruvate from D-glyceraldehyde 3-phosphate: step 4/5. Catalyzes the reversible conversion of 2-phosphoglycerate (2-PG) into phosphoenolpyruvate (PEP). It is essential for the degradation of carbohydrates via glycolysis. This Sodalis glossinidius (strain morsitans) protein is Enolase.